The following is a 664-amino-acid chain: Cyclic nucleotide-gated channel alpha-2 (664 aa).

The span at 1–10 (MMTEKSNGVK) shows a compositional bias: polar residues. A disordered region spans residues 1 to 61 (MMTEKSNGVK…LQRLAEMDTP (61 aa)). Topologically, residues 1–146 (MMTEKSNGVK…PAGDWYYRWL (146 aa)) are cytoplasmic. A helical membrane pass occupies residues 147-168 (FVIAMPVLYNWCLLVARACFSD). Topologically, residues 169–178 (LQRNYFVVWL) are extracellular. The chain crosses the membrane as a helical span at residues 179-199 (VLDYFSDTVYIADLIIRLRTG). Over 200-224 (FLEQGLLVKDPKKLRDNYIHTLQFK) the chain is Cytoplasmic. The helical transmembrane segment at 225–243 (LDVASIIPTDLIYFAVGIH) threads the bilayer. Residues 244-248 (SPEVR) are Extracellular-facing. A helical membrane pass occupies residues 249-267 (FNRLLHFARMFEFFDRTET). The Cytoplasmic segment spans residues 268-274 (RTSYPNI). The segment at 272 to 380 (PNIFRISNLV…GNVGSMISNM (109 aa)) is ion conduction pathway. Residues 275 to 298 (FRISNLVLYILVIIHWNACIYYAI) form a helical membrane-spanning segment. The Extracellular portion of the chain corresponds to 299-321 (SKSIGFGVDTWVYPNITDPEYGY). 2 helical membrane-spanning segments follow: residues 322 to 356 (LARE…LFVI) and 357 to 381 (FDFL…SNMN). The interval 339–342 (TIGE) is selectivity filter. A C-linker region spans residues 382-458 (ATRAEFQAKI…STLKKVRIFQ (77 aa)). The Cytoplasmic portion of the chain corresponds to 382 to 664 (ATRAEFQAKI…INTPEPAVAE (283 aa)). A cyclic nucleotide-binding domain region spans residues 462-582 (AGLLVELVLK…EERGREILMK (121 aa)). Positions 522, 525, 538, and 539 each coordinate 3',5'-cyclic GMP. 3',5'-cyclic AMP-binding residues include arginine 538 and threonine 539. Positions 599–653 (VQEKLEQLETNMETLYTRFARLLAEYTGAQQKLKQRITVLETKMKQNHEDDYLSD) form a coiled coil.

The protein belongs to the cyclic nucleotide-gated cation channel (TC 1.A.1.5) family. CNGA2 subfamily. In terms of assembly, the olfactory cyclic nucleotide-gated channel is an heterotetramer composed of CNGA2, CNGA4 and CNGB1b subunits with 2:1:1 stoichiometry.

It localises to the cell projection. Its subcellular location is the cilium membrane. The catalysed reaction is Ca(2+)(in) = Ca(2+)(out). It catalyses the reaction Na(+)(in) = Na(+)(out). It carries out the reaction K(+)(in) = K(+)(out). The enzyme catalyses NH4(+)(in) = NH4(+)(out). The catalysed reaction is Rb(+)(in) = Rb(+)(out). It catalyses the reaction Li(+)(in) = Li(+)(out). It carries out the reaction Cs(+)(in) = Cs(+)(out). Pore-forming subunit of the olfactory cyclic nucleotide-gated channel. Operates in the cilia of olfactory sensory neurons where chemical stimulation of the odorant is converted to an electrical signal. Mediates odorant-induced cAMP-dependent Ca(2+) influx triggering neuron depolarization. The rise of intracellular Ca(2+) levels potentiates the olfactory response by activating Ca(2+)-dependent Cl(-) channels, but it also serves as a negative feedback signal to desensitize the channel for rapid adaptation to odorants. Conducts cAMP- and cGMP-gated ion currents, with permeability for monovalent and divalent cations. The chain is Cyclic nucleotide-gated channel alpha-2 from Mus musculus (Mouse).